A 383-amino-acid polypeptide reads, in one-letter code: MTNPPRILVVAGEASGDTHAAELVAALRARRPDLTFFGMGGARLAAQGVELLFDAREVSVMGITEVLPRIPRILQILKGLAEAAAERKPDVAILVDIPDFNLRLAKKLKALGVPVAYYVSPMIWAWRRGRVRTIKRLVDRMLCILPFEEDFYREAGVSARYVGSPVVEQVPSPDTATAFRERLGLSKDAPTLALLPGSRMGEIRRLLPDMVEAAKRLSAERPGLQVVVPLAPTIDREEITSRFEGSGVTPILVEGRAPEVVGASDAAVVASGTAVLEAGLMQRPLVVVYRVSLITYWVGRLMLKVAFVSLINLLAGRRVVPELLQGEMTPERIAEEVRRVWIPGAPREEMLQGLAEMRGRLGETGAATRAAESVLELLPPGRV.

The protein belongs to the LpxB family.

It carries out the reaction a lipid X + a UDP-2-N,3-O-bis[(3R)-3-hydroxyacyl]-alpha-D-glucosamine = a lipid A disaccharide + UDP + H(+). It functions in the pathway bacterial outer membrane biogenesis; LPS lipid A biosynthesis. Functionally, condensation of UDP-2,3-diacylglucosamine and 2,3-diacylglucosamine-1-phosphate to form lipid A disaccharide, a precursor of lipid A, a phosphorylated glycolipid that anchors the lipopolysaccharide to the outer membrane of the cell. This chain is Lipid-A-disaccharide synthase, found in Myxococcus xanthus (strain DK1622).